A 113-amino-acid polypeptide reads, in one-letter code: uncharacterized protein (113 aa).

Belongs to the HesB/IscA family.

This is an uncharacterized protein from Synechocystis sp. (strain ATCC 27184 / PCC 6803 / Kazusa).